A 132-amino-acid polypeptide reads, in one-letter code: Chaperone protein SycT (132 aa).

In terms of assembly, binds to YopT.

Functionally, functions as a specific chaperone for YopT. The protein is Chaperone protein SycT (sycT) of Yersinia pestis.